The sequence spans 579 residues: CTP synthase (579 aa).

The segment at methionine 1–leucine 281 is amidoligase domain. Serine 23 contributes to the CTP binding site. UTP is bound at residue serine 23. ATP-binding positions include serine 24–leucine 29 and aspartate 81. Mg(2+) contacts are provided by aspartate 81 and glutamate 155. Residues aspartate 162–glutamate 164, lysine 202–glutamine 207, and lysine 238 each bind CTP. UTP is bound by residues lysine 202 to glutamine 207 and lysine 238. Residues arginine 306–alanine 554 form the Glutamine amidotransferase type-1 domain. Glycine 369 provides a ligand contact to L-glutamine. The Nucleophile; for glutamine hydrolysis role is filled by cysteine 396. Residues leucine 397–glutamine 400, glutamate 419, and arginine 480 each bind L-glutamine. Catalysis depends on residues histidine 527 and glutamate 529.

The protein belongs to the CTP synthase family. In terms of assembly, homotetramer.

The catalysed reaction is UTP + L-glutamine + ATP + H2O = CTP + L-glutamate + ADP + phosphate + 2 H(+). The enzyme catalyses L-glutamine + H2O = L-glutamate + NH4(+). It carries out the reaction UTP + NH4(+) + ATP = CTP + ADP + phosphate + 2 H(+). It functions in the pathway pyrimidine metabolism; CTP biosynthesis via de novo pathway; CTP from UDP: step 2/2. Allosterically activated by GTP, when glutamine is the substrate; GTP has no effect on the reaction when ammonia is the substrate. The allosteric effector GTP functions by stabilizing the protein conformation that binds the tetrahedral intermediate(s) formed during glutamine hydrolysis. Inhibited by the product CTP, via allosteric rather than competitive inhibition. Catalyzes the ATP-dependent amination of UTP to CTP with either L-glutamine or ammonia as the source of nitrogen. Regulates intracellular CTP levels through interactions with the four ribonucleotide triphosphates. This Mycobacterium sp. (strain JLS) protein is CTP synthase.